A 207-amino-acid chain; its full sequence is uncharacterized protein (207 aa).

The N-terminal stretch at 1 to 19 (MRFNVSFLLSLLLPTLAFA) is a signal peptide.

The protein to P.multocida PM1509.

This is an uncharacterized protein from Pasteurella multocida (strain Pm70).